Reading from the N-terminus, the 655-residue chain is p-hydroxybenzoic acid efflux pump subunit AaeB (655 aa).

The next 11 membrane-spanning stretches (helical) occupy residues phenylalanine 13 to leucine 33, tryptophan 38 to proline 58, leucine 69 to isoleucine 89, leucine 93 to valine 113, tryptophan 121 to leucine 141, glutamate 152 to isoleucine 172, leucine 370 to valine 390, phenylalanine 407 to proline 427, glutamine 431 to valine 451, methionine 459 to phenylalanine 479, and phenylalanine 482 to leucine 502.

This sequence belongs to the aromatic acid exporter ArAE (TC 2.A.85) family.

The protein resides in the cell inner membrane. Its function is as follows. Forms an efflux pump with AaeA. Could function as a metabolic relief valve, allowing to eliminate certain compounds when they accumulate to high levels in the cell. The polypeptide is p-hydroxybenzoic acid efflux pump subunit AaeB (Salmonella enteritidis PT4 (strain P125109)).